A 245-amino-acid chain; its full sequence is Octanoyltransferase (245 aa).

The BPL/LPL catalytic domain maps to 54–242 (KTAHEQVWLL…AFEKIFGPTI (189 aa)). Residues 93-100 (RGGEFTYH), 173-175 (AIG), and 186-188 (GVS) contribute to the substrate site. The active-site Acyl-thioester intermediate is C204.

It belongs to the LipB family.

It is found in the cytoplasm. The enzyme catalyses octanoyl-[ACP] + L-lysyl-[protein] = N(6)-octanoyl-L-lysyl-[protein] + holo-[ACP] + H(+). Its pathway is protein modification; protein lipoylation via endogenous pathway; protein N(6)-(lipoyl)lysine from octanoyl-[acyl-carrier-protein]: step 1/2. Its function is as follows. Catalyzes the transfer of endogenously produced octanoic acid from octanoyl-acyl-carrier-protein onto the lipoyl domains of lipoate-dependent enzymes. Lipoyl-ACP can also act as a substrate although octanoyl-ACP is likely to be the physiological substrate. This is Octanoyltransferase from Bartonella tribocorum (strain CIP 105476 / IBS 506).